Here is a 177-residue protein sequence, read N- to C-terminus: Large ribosomal subunit protein uL6 (177 aa).

Basic and acidic residues predominate over residues 152 to 171 (RPPEPYKGKGVRYDDEEVRR). Residues 152 to 177 (RPPEPYKGKGVRYDDEEVRRKEAKKK) form a disordered region.

This sequence belongs to the universal ribosomal protein uL6 family. In terms of assembly, part of the 50S ribosomal subunit.

Functionally, this protein binds to the 23S rRNA, and is important in its secondary structure. It is located near the subunit interface in the base of the L7/L12 stalk, and near the tRNA binding site of the peptidyltransferase center. The chain is Large ribosomal subunit protein uL6 from Shewanella sp. (strain MR-4).